Reading from the N-terminus, the 492-residue chain is Catalase (492 aa).

Active-site residues include His-65 and Asn-138. A heme-binding site is contributed by Tyr-348.

This sequence belongs to the catalase family. Homotetramer. Heme serves as cofactor.

Its subcellular location is the cytoplasm. The protein resides in the cytosol. It localises to the peroxisome matrix. The enzyme catalyses 2 H2O2 = O2 + 2 H2O. Functionally, catalyzes the degradation of hydrogen peroxide (H(2)O(2)) generated by peroxisomal oxidases to water and oxygen, thereby protecting cells from the toxic effects of hydrogen peroxide. The polypeptide is Catalase (Soldanella alpina (Alpine snowbell)).